Reading from the N-terminus, the 344-residue chain is Protein L-Myc-1-B (344 aa).

2 stretches are compositionally biased toward polar residues: residues G104–K113 and N213–S223. Disordered regions lie at residues G104–I162 and L208–R271. Basic and acidic residues predominate over residues D259 to E270. The bHLH domain occupies A261–L313. Residues L313–L341 are leucine-zipper.

Efficient DNA binding requires dimerization with another bHLH protein. Binds DNA as a heterodimer with MAX. High levels in oocytes, modest levels in kidney and low levels in spleen.

It is found in the nucleus. This Xenopus laevis (African clawed frog) protein is Protein L-Myc-1-B (mycl1-b).